The following is a 264-amino-acid chain: Apolipoprotein A-I (264 aa).

A signal peptide spans 1–18 (MRVVVVTLALLFLTGTQA). Tandem repeats lie at residues 67–88 (LKLA…EDMA) and 89–110 (PYYK…AELT). Positions 67–264 (LKLADNLDTL…LLDELQKTVA (198 aa)) are 10 X approximate tandem repeats. Residues 111–121 (KDLEEVKEKIR) form a 3; half-length repeat. Tandem repeats lie at residues 122-143 (PFLD…QRLA), 144-165 (PVAE…QKLT), 166-187 (PVAE…KNLA), 188-209 (PYSD…EKGI), and 210-231 (PQAA…EKMT). Residues 232–242 (PLVQDFKERLT) form a 9; half-length repeat. The stretch at 243–264 (PYAENLKTRFISLLDELQKTVA) is repeat 10.

The protein belongs to the apolipoprotein A1/A4/E family. In terms of tissue distribution, major protein of plasma HDL, also found in chylomicrons.

It is found in the secreted. In terms of biological role, participates in the reverse transport of cholesterol from tissues to the liver for excretion by promoting cholesterol efflux from tissues and by acting as a cofactor for the lecithin cholesterol acyltransferase (LCAT). This chain is Apolipoprotein A-I (APOA1), found in Anas platyrhynchos (Mallard).